Consider the following 67-residue polypeptide: Retron Se72 cold shock-like protein (67 aa).

Positions 1–66 (MENGFVNFYD…KGFKAVAIQK (66 aa)) constitute a CSD domain.

Functionally, probable cold shock-like component of antiviral defense system retron Se72, composed of a non-coding RNA (ncRNA), a reverse transcriptase (RT) and this protein. Expression of retron Se72 confers protection against bacteriophage lambda. At multiplicity of infection (MOI) of 0.02 cultures slow growth when infected with lambda but do not collapse, at MOI 2 cultures enter growth stasis. In Salmonella heidelberg (strain 579083-10), this protein is Retron Se72 cold shock-like protein.